The primary structure comprises 729 residues: Fibroblast growth factor receptor homolog 1 (729 aa).

The signal sequence occupies residues 1 to 36 (MAAAWSWRASHSTITMTSGSLVVLFLLLSIWQPAVQ). Over 37–309 (VEGRRQMANS…VASGSLHSTS (273 aa)) the chain is Extracellular. A disordered region spans residues 56 to 101 (ARSQNKTPAITNNANQSSTSSADLDDGAADDDDNKADLPVNVSSKP). Residues 66 to 77 (TNNANQSSTSSA) are compositionally biased toward low complexity. A glycan (N-linked (GlcNAc...) asparagine) is linked at asparagine 70. The segment covering 78 to 89 (DLDDGAADDDDN) has biased composition (acidic residues). Residues asparagine 96, asparagine 134, asparagine 140, asparagine 171, asparagine 207, asparagine 213, asparagine 242, asparagine 246, and asparagine 282 are each glycosylated (N-linked (GlcNAc...) asparagine). Ig-like C2-type domains are found at residues 106 to 192 (PKKM…VIVS) and 203 to 279 (TGPL…NSLG). An intrachain disulfide couples cysteine 125 to cysteine 174. Residues cysteine 220 and cysteine 272 are joined by a disulfide bond. The chain crosses the membrane as a helical span at residues 310–330 (FVYIFVFGGLIFIFMTTLFVF). Residues 331–729 (YAIRKMKHEK…TDNLQKWCNY (399 aa)) lie on the Cytoplasmic side of the membrane. The region spanning 416-692 (LVLGATLGEG…EIVEYMDKLL (277 aa)) is the Protein kinase domain. Residues 422–430 (LGEGAFGRV) and lysine 443 each bind ATP. Aspartate 556 serves as the catalytic Proton acceptor. A Phosphotyrosine; by autocatalysis modification is found at tyrosine 587.

The protein belongs to the protein kinase superfamily. Tyr protein kinase family. Fibroblast growth factor receptor subfamily. As to expression, in early embryos, expression is specific to mesodermal primordium and invaginated mesodermal cells. At later stages, expression is seen in putative muscle precursor cells and in the CNS.

The protein localises to the membrane. It catalyses the reaction L-tyrosyl-[protein] + ATP = O-phospho-L-tyrosyl-[protein] + ADP + H(+). Functionally, may be required for patterning of muscle precursor cells. May be essential for generation of mesodermal and endodermal layers, invaginations of various types of cells and CNS formation. This is Fibroblast growth factor receptor homolog 1 (htl) from Drosophila melanogaster (Fruit fly).